The sequence spans 348 residues: Phosphoribosylformylglycinamidine cyclo-ligase (348 aa).

It belongs to the AIR synthase family.

It is found in the cytoplasm. It catalyses the reaction 2-formamido-N(1)-(5-O-phospho-beta-D-ribosyl)acetamidine + ATP = 5-amino-1-(5-phospho-beta-D-ribosyl)imidazole + ADP + phosphate + H(+). The protein operates within purine metabolism; IMP biosynthesis via de novo pathway; 5-amino-1-(5-phospho-D-ribosyl)imidazole from N(2)-formyl-N(1)-(5-phospho-D-ribosyl)glycinamide: step 2/2. In Geotalea daltonii (strain DSM 22248 / JCM 15807 / FRC-32) (Geobacter daltonii), this protein is Phosphoribosylformylglycinamidine cyclo-ligase.